Consider the following 142-residue polypeptide: Large ribosomal subunit protein uL13 (142 aa).

Belongs to the universal ribosomal protein uL13 family. Part of the 50S ribosomal subunit.

Functionally, this protein is one of the early assembly proteins of the 50S ribosomal subunit, although it is not seen to bind rRNA by itself. It is important during the early stages of 50S assembly. This chain is Large ribosomal subunit protein uL13, found in Nitrosococcus oceani (strain ATCC 19707 / BCRC 17464 / JCM 30415 / NCIMB 11848 / C-107).